A 265-amino-acid chain; its full sequence is Orotidine 5'-phosphate decarboxylase (265 aa).

Residues aspartate 38, 60–62, 91–100, tyrosine 213, and arginine 232 each bind substrate; these read KTH and DRKFADIGNT. Lysine 93 serves as the catalytic Proton donor.

This sequence belongs to the OMP decarboxylase family.

The catalysed reaction is orotidine 5'-phosphate + H(+) = UMP + CO2. It functions in the pathway pyrimidine metabolism; UMP biosynthesis via de novo pathway; UMP from orotate: step 2/2. The polypeptide is Orotidine 5'-phosphate decarboxylase (pyrG) (Rhizopus oryzae (Mucormycosis agent)).